A 1240-amino-acid polypeptide reads, in one-letter code: ABC transporter B family member 17 (1240 aa).

An ABC transmembrane type-1 1 domain is found at 35-324 (MALGLIGAVG…SLSNLKYFSE (290 aa)). A helical membrane pass occupies residues 36-56 (ALGLIGAVGDGFITPVVVFIF). N-linked (GlcNAc...) asparagine glycosylation is present at asparagine 70. 5 consecutive transmembrane segments (helical) span residues 81 to 101 (VVALLYVACGSWVICFLEGYC), 158 to 180 (LPNFLMNASAFVASYIVSFILMW), 184 to 206 (IVGFPFIILLLVPGLMYGRALVS), 264 to 284 (GITIGSNGVTHAIWAFLTWYG), and 296 to 316 (GTVFVVISCITYGGVSLGQSL). One can recognise an ABC transporter 1 domain in the interval 359-595 (VEFNHVKFTY…IDGQYTSLVS (237 aa)). 394 to 401 (GGSGSGKS) serves as a coordination point for ATP. Residues asparagine 542, asparagine 609, and asparagine 642 are each glycosylated (N-linked (GlcNAc...) asparagine). An ABC transmembrane type-1 2 domain is found at 672 to 960 (ALYGCLSAAL…AGTMTTDLAR (289 aa)). 2 consecutive transmembrane segments (helical) span residues 681 to 701 (LVGVLQPVSAYSAGSVISVFF) and 714 to 734 (IYVLLFVGLAIFSFLVNISQH). Asparagine 769 is a glycosylation site (N-linked (GlcNAc...) asparagine). 4 helical membrane-spanning segments follow: residues 793-815 (MSLLVQTISAVIIACIIGLVIAW), 817-839 (LAIVMISVQPLIVVCFYTQRVLL), 896-919 (WLAGIVLGTSRSLITCTSALNFWY), and 923-943 (LIADGKIVSKAFFEIFLIFVT). One can recognise an ABC transporter 2 domain in the interval 995–1233 (ITFLNVDFAY…GPTGTYFSLA (239 aa)). The N-linked (GlcNAc...) asparagine glycan is linked to asparagine 1015. 1030 to 1037 (GTSGSGKS) is an ATP binding site.

This sequence belongs to the ABC transporter superfamily. ABCB family. Multidrug resistance exporter (TC 3.A.1.201) subfamily.

The protein resides in the membrane. The polypeptide is ABC transporter B family member 17 (ABCB17) (Arabidopsis thaliana (Mouse-ear cress)).